The primary structure comprises 1256 residues: N-acetylglucosamine-1-phosphotransferase subunits alpha/beta (1256 aa).

Residues Val22–Leu42 traverse the membrane as a helical segment. Residues Asn83, Asn114, Asn148, Asn179, and Asn250 are each glycosylated (N-linked (GlcNAc...) asparagine). 4 disulfide bridges follow: Cys438–Cys461, Cys452–Cys468, Cys505–Cys528, and Cys519–Cys535. 2 LNR repeats span residues Cys438–Gly473 and Cys505–Lys545. Ca(2+) is bound by residues Asp449, Asp464, Asp467, Asp516, Asp531, and Asp534. 5 N-linked (GlcNAc...) asparagine glycosylation sites follow: Asn614, Asn699, Asn729, Asn829, and Asn1009. The DMAP1-binding domain maps to Asn699 to Asn798. The region spanning Val1005–Leu1040 is the EF-hand domain. The Ca(2+) site is built by Asp1018, Asp1020, Ser1022, and Glu1029. The N-linked (GlcNAc...) asparagine glycan is linked to Asn1129. The helical transmembrane segment at Val1215–Leu1235 threads the bilayer.

Belongs to the stealth family. In terms of assembly, hexamer of two alpha, two beta and two gamma (GNPTG) subunits; disulfide-linked. The alpha and/or the beta subunits of the enzyme constitute the catalytic subunits. Interacts with LYSET; facilitates proper localization of GNPTAB. In terms of processing, the alpha- and beta-subunits are generated by a proteolytic cleavage by MBTPS1 protease at the Lys-928-Asp-929 bond. In terms of tissue distribution, expressed in the heart, whole brain, placenta, lung, liver, skeletal muscle, kidney and pancreas.

It is found in the golgi apparatus membrane. It catalyses the reaction N(4)-[alpha-D-mannosyl-(1-&gt;2)-alpha-D-mannosyl-(glycan)]-L-asparaginyl-[protein] + UDP-N-acetyl-alpha-D-glucosamine = N(4)-[6-(N-acetyl-alpha-D-glucosaminyl-1-phospho)-alpha-D-mannosyl-(1-&gt;2)-alpha-D-mannosyl-(glycan)]-L-asparaginyl-[protein] + UMP + H(+). In terms of biological role, catalyzes the formation of mannose 6-phosphate (M6P) markers on high mannose type oligosaccharides in the Golgi apparatus. M6P residues are required to bind to the M6P receptors (MPR), which mediate the vesicular transport of lysosomal enzymes to the endosomal/prelysosomal compartment. In Homo sapiens (Human), this protein is N-acetylglucosamine-1-phosphotransferase subunits alpha/beta (GNPTAB).